Reading from the N-terminus, the 154-residue chain is Large ribosomal subunit protein uL13 (154 aa).

The protein belongs to the universal ribosomal protein uL13 family. In terms of assembly, part of the 50S ribosomal subunit.

Functionally, this protein is one of the early assembly proteins of the 50S ribosomal subunit, although it is not seen to bind rRNA by itself. It is important during the early stages of 50S assembly. This is Large ribosomal subunit protein uL13 from Cereibacter sphaeroides (strain ATCC 17025 / ATH 2.4.3) (Rhodobacter sphaeroides).